The sequence spans 223 residues: Deoxyribose-phosphate aldolase 1 (223 aa).

The Proton donor/acceptor role is filled by Asp-91. Catalysis depends on Lys-153, which acts as the Schiff-base intermediate with acetaldehyde. The active-site Proton donor/acceptor is the Lys-182.

Belongs to the DeoC/FbaB aldolase family. DeoC type 1 subfamily.

It is found in the cytoplasm. The catalysed reaction is 2-deoxy-D-ribose 5-phosphate = D-glyceraldehyde 3-phosphate + acetaldehyde. It participates in carbohydrate degradation; 2-deoxy-D-ribose 1-phosphate degradation; D-glyceraldehyde 3-phosphate and acetaldehyde from 2-deoxy-alpha-D-ribose 1-phosphate: step 2/2. Its function is as follows. Catalyzes a reversible aldol reaction between acetaldehyde and D-glyceraldehyde 3-phosphate to generate 2-deoxy-D-ribose 5-phosphate. In Yersinia pestis, this protein is Deoxyribose-phosphate aldolase 1.